The following is a 257-amino-acid chain: Isoprenyl transferase (257 aa).

D34 is an active-site residue. A Mg(2+)-binding site is contributed by D34. Substrate is bound by residues 35 to 38 (GNGR), W39, R47, H51, and 79 to 81 (STE). The active-site Proton acceptor is the N82. Substrate is bound by residues W83, R85, R202, and 208–210 (RLS). E221 serves as a coordination point for Mg(2+).

The protein belongs to the UPP synthase family. Homodimer. It depends on Mg(2+) as a cofactor.

Catalyzes the condensation of isopentenyl diphosphate (IPP) with allylic pyrophosphates generating different type of terpenoids. This is Isoprenyl transferase from Geobacillus kaustophilus (strain HTA426).